A 304-amino-acid chain; its full sequence is tRNA pseudouridine synthase B (304 aa).

D44 acts as the Nucleophile in catalysis.

The protein belongs to the pseudouridine synthase TruB family. Type 1 subfamily.

The catalysed reaction is uridine(55) in tRNA = pseudouridine(55) in tRNA. Responsible for synthesis of pseudouridine from uracil-55 in the psi GC loop of transfer RNAs. In Novosphingobium aromaticivorans (strain ATCC 700278 / DSM 12444 / CCUG 56034 / CIP 105152 / NBRC 16084 / F199), this protein is tRNA pseudouridine synthase B.